Consider the following 468-residue polypeptide: uncharacterized protein (468 aa).

Residues 1-27 form the signal peptide; that stretch reads MRKWYFILLAGVLTSVILAFVYDKTKA. 8 PbH1 repeats span residues 125–154, 156–185, 189–214, 216–238, 249–283, 284–305, 312–334, and 397–420; these read KHDI…YVSG, SSHI…AVYG, MKDI…VLNG, IDGF…DLIG, VRNG…YVDG, GHDI…EATS, ANAI…SIGG, and NEGN…WMWK.

The protein resides in the secreted. This is an uncharacterized protein from Bacillus subtilis (strain 168).